We begin with the raw amino-acid sequence, 480 residues long: Probable glycosyltransferase At5g25310 (480 aa).

The Cytoplasmic segment spans residues 1 to 10; it reads MDKFQSKFTR. A helical; Signal-anchor for type II membrane protein membrane pass occupies residues 11–31; the sequence is FGFISICFGSIALVLLISHCS. The Lumenal portion of the chain corresponds to 32–480; that stretch reads TSFFDYSFQK…WLRRLNLKLT (449 aa). N-linked (GlcNAc...) asparagine glycans are attached at residues Asn85, Asn120, Asn243, Asn271, and Asn281.

It belongs to the glycosyltransferase 47 family.

The protein localises to the golgi apparatus membrane. In terms of biological role, may be involved in cell wall biosynthesis. This Arabidopsis thaliana (Mouse-ear cress) protein is Probable glycosyltransferase At5g25310.